We begin with the raw amino-acid sequence, 686 residues long: tRNA wybutosine-synthesizing protein 4 (686 aa).

Residues Met1–Ala10 show a composition bias toward basic and acidic residues. Positions Met1–Ala21 are disordered. S-adenosyl-L-methionine-binding positions include Arg59, Gly89, Asp114, Asp161–Leu162, and Glu188.

Belongs to the methyltransferase superfamily. LCMT family. As to quaternary structure, interacts with RNF144B/IBRDC2.

It carries out the reaction 7-[(3S)-3-amino-3-carboxypropyl]wyosine(37) in tRNA(Phe) + S-adenosyl-L-methionine = 7-[(3S)-(3-amino-3-methoxycarbonyl)propyl]wyosine(37) in tRNA(Phe) + S-adenosyl-L-homocysteine. The enzyme catalyses 7-[(3S)-(3-amino-3-methoxycarbonyl)propyl]wyosine(37) in tRNA(Phe) + S-adenosyl-L-methionine + CO2 = wybutosine(37) in tRNA(Phe) + S-adenosyl-L-homocysteine + 2 H(+). It functions in the pathway tRNA modification; wybutosine-tRNA(Phe) biosynthesis. Its function is as follows. Probable S-adenosyl-L-methionine-dependent methyltransferase that acts as a component of the wybutosine biosynthesis pathway. Wybutosine is a hyper modified guanosine with a tricyclic base found at the 3'-position adjacent to the anticodon of eukaryotic phenylalanine tRNA. May methylate the carboxyl group of leucine residues to form alpha-leucine ester residues. This is tRNA wybutosine-synthesizing protein 4 (LCMT2) from Homo sapiens (Human).